A 320-amino-acid chain; its full sequence is Mitochondrial oxaloacetate transport protein (320 aa).

3 Solcar repeats span residues 21–114 (LGPV…IRRT), 126–218 (NKLA…AKRM), and 227–313 (EGMI…TNKL). Helical transmembrane passes span 26-47 (GFLS…FEVI), 91-111 (GTAY…YEPI), 129-145 (AINV…GALF), 197-217 (AILR…WAKR), 233-253 (LTAS…FDTV), and 285-306 (LYKG…CLTF).

It belongs to the mitochondrial carrier (TC 2.A.29) family.

The protein localises to the mitochondrion inner membrane. It carries out the reaction a dicarboxylate(in) + sulfate(out) = a dicarboxylate(out) + sulfate(in). It catalyses the reaction (2S)-2-isopropylmalate(in) + sulfate(out) = (2S)-2-isopropylmalate(out) + sulfate(in). The catalysed reaction is (2R,3S)-3-isopropylmalate(in) + sulfate(out) = (2R,3S)-3-isopropylmalate(out) + sulfate(in). The enzyme catalyses malonate(in) + sulfate(out) = malonate(out) + sulfate(in). It carries out the reaction oxaloacetate(in) + sulfate(out) = oxaloacetate(out) + sulfate(in). It catalyses the reaction thiosulfate(in) + sulfate(out) = thiosulfate(out) + sulfate(in). Its function is as follows. Antiporter that exchanges dicarboxylates and sulfur oxoanions across the inner membrane of mitochondria. Exports alpha-isopropylmalate from mitochondrial matrix to the cytosol, where it serves as a precursor for leucine biosynthesis. In Schizosaccharomyces pombe (strain 972 / ATCC 24843) (Fission yeast), this protein is Mitochondrial oxaloacetate transport protein (oac1).